A 417-amino-acid chain; its full sequence is Gamma-glutamyl phosphate reductase (417 aa).

The protein belongs to the gamma-glutamyl phosphate reductase family.

It localises to the cytoplasm. The catalysed reaction is L-glutamate 5-semialdehyde + phosphate + NADP(+) = L-glutamyl 5-phosphate + NADPH + H(+). It functions in the pathway amino-acid biosynthesis; L-proline biosynthesis; L-glutamate 5-semialdehyde from L-glutamate: step 2/2. Functionally, catalyzes the NADPH-dependent reduction of L-glutamate 5-phosphate into L-glutamate 5-semialdehyde and phosphate. The product spontaneously undergoes cyclization to form 1-pyrroline-5-carboxylate. This Haemophilus influenzae (strain ATCC 51907 / DSM 11121 / KW20 / Rd) protein is Gamma-glutamyl phosphate reductase.